Reading from the N-terminus, the 701-residue chain is Elongation factor G (701 aa).

The region spanning 8-290 (ARYRNIGISA…AVIEYLPAPT (283 aa)) is the tr-type G domain. Residues 17-24 (AHIDAGKT), 88-92 (DTPGH), and 142-145 (NKMD) each bind GTP.

The protein belongs to the TRAFAC class translation factor GTPase superfamily. Classic translation factor GTPase family. EF-G/EF-2 subfamily.

The protein localises to the cytoplasm. Catalyzes the GTP-dependent ribosomal translocation step during translation elongation. During this step, the ribosome changes from the pre-translocational (PRE) to the post-translocational (POST) state as the newly formed A-site-bound peptidyl-tRNA and P-site-bound deacylated tRNA move to the P and E sites, respectively. Catalyzes the coordinated movement of the two tRNA molecules, the mRNA and conformational changes in the ribosome. The chain is Elongation factor G from Sodalis glossinidius (strain morsitans).